Reading from the N-terminus, the 367-residue chain is Peptide chain release factor 2 (367 aa).

At Gln254 the chain carries N5-methylglutamine.

The protein belongs to the prokaryotic/mitochondrial release factor family. Methylated by PrmC. Methylation increases the termination efficiency of RF2.

The protein resides in the cytoplasm. Peptide chain release factor 2 directs the termination of translation in response to the peptide chain termination codons UGA and UAA. The polypeptide is Peptide chain release factor 2 (Bordetella bronchiseptica (strain ATCC BAA-588 / NCTC 13252 / RB50) (Alcaligenes bronchisepticus)).